We begin with the raw amino-acid sequence, 148 residues long: Deoxyuridine 5'-triphosphate nucleotidohydrolase (148 aa).

Substrate-binding positions include Arg68 to Gly70, Asn81, Thr85 to Asp87, and Lys95.

The protein belongs to the dUTPase family. It depends on Mg(2+) as a cofactor.

It carries out the reaction dUTP + H2O = dUMP + diphosphate + H(+). The protein operates within pyrimidine metabolism; dUMP biosynthesis; dUMP from dCTP (dUTP route): step 2/2. Functionally, this enzyme is involved in nucleotide metabolism: it produces dUMP, the immediate precursor of thymidine nucleotides and it decreases the intracellular concentration of dUTP so that uracil cannot be incorporated into DNA. The sequence is that of Deoxyuridine 5'-triphosphate nucleotidohydrolase from Rickettsia prowazekii (strain Madrid E).